The primary structure comprises 308 residues: Ribosomal RNA large subunit methyltransferase F (308 aa).

Belongs to the methyltransferase superfamily. METTL16/RlmF family.

The protein localises to the cytoplasm. The catalysed reaction is adenosine(1618) in 23S rRNA + S-adenosyl-L-methionine = N(6)-methyladenosine(1618) in 23S rRNA + S-adenosyl-L-homocysteine + H(+). Functionally, specifically methylates the adenine in position 1618 of 23S rRNA. This is Ribosomal RNA large subunit methyltransferase F from Salmonella dublin (strain CT_02021853).